Consider the following 430-residue polypeptide: Zinc finger CCCH domain-containing protein 48 (430 aa).

Disordered regions lie at residues 1 to 27 and 56 to 90; these read MDLDMNGGNKRVFQRLGGGSNRPTTDS and GSGPVAASSNKRVADESGFAGPSHRRGPGFSGTAN. Residues 26-52 form a C3H1-type 1 zinc finger; that stretch reads DSNQKVCFHWRAGRCNRYPCPYLHREL. Residues 102-129 form a C3H1-type 2 zinc finger; the sequence is TKTEKLCKFWVDGNCPYGDKCRYLHCWS. 6 WD repeats span residues 142–183, 221–258, 265–304, 306–342, 345–389, and 391–429; these read GHQK…GVLN, GPVGQVYSLVVGTDLLFAGTQDGSILVWRYNSTTSCFD, GHTLAVVSLYVGANRLYSGAMDNSIKVWSLDNLQCIQTLT, HTSVVMSLICWDQFLLSCSLDNTVKIWAATEGGNLEV, THKE…ERGK, and LAKQEIRSIQIGPGGIFFTGDGSGQVKVWKWSTESTPIL.

This is Zinc finger CCCH domain-containing protein 48 (ZFWD1) from Arabidopsis thaliana (Mouse-ear cress).